Reading from the N-terminus, the 254-residue chain is PF03932 family protein CutC (254 aa).

Belongs to the CutC family.

It is found in the cytoplasm. This is PF03932 family protein CutC from Yersinia enterocolitica serotype O:8 / biotype 1B (strain NCTC 13174 / 8081).